The primary structure comprises 609 residues: Dihydroxy-acid dehydratase (609 aa).

Asp-82 contributes to the Mg(2+) binding site. Cys-123 contacts [2Fe-2S] cluster. 2 residues coordinate Mg(2+): Asp-124 and Lys-125. Position 125 is an N6-carboxylysine (Lys-125). [2Fe-2S] cluster is bound at residue Cys-192. Glu-489 serves as a coordination point for Mg(2+). The Proton acceptor role is filled by Ser-515.

Belongs to the IlvD/Edd family. As to quaternary structure, homodimer. [2Fe-2S] cluster is required as a cofactor. The cofactor is Mg(2+).

The enzyme catalyses (2R)-2,3-dihydroxy-3-methylbutanoate = 3-methyl-2-oxobutanoate + H2O. It catalyses the reaction (2R,3R)-2,3-dihydroxy-3-methylpentanoate = (S)-3-methyl-2-oxopentanoate + H2O. It participates in amino-acid biosynthesis; L-isoleucine biosynthesis; L-isoleucine from 2-oxobutanoate: step 3/4. Its pathway is amino-acid biosynthesis; L-valine biosynthesis; L-valine from pyruvate: step 3/4. Functionally, functions in the biosynthesis of branched-chain amino acids. Catalyzes the dehydration of (2R,3R)-2,3-dihydroxy-3-methylpentanoate (2,3-dihydroxy-3-methylvalerate) into 2-oxo-3-methylpentanoate (2-oxo-3-methylvalerate) and of (2R)-2,3-dihydroxy-3-methylbutanoate (2,3-dihydroxyisovalerate) into 2-oxo-3-methylbutanoate (2-oxoisovalerate), the penultimate precursor to L-isoleucine and L-valine, respectively. The protein is Dihydroxy-acid dehydratase of Azobacteroides pseudotrichonymphae genomovar. CFP2.